The following is a 260-amino-acid chain: UPF0246 protein Bcep1808_2308 (260 aa).

The protein belongs to the UPF0246 family.

In Burkholderia vietnamiensis (strain G4 / LMG 22486) (Burkholderia cepacia (strain R1808)), this protein is UPF0246 protein Bcep1808_2308.